The following is a 154-amino-acid chain: 3-dehydroquinate dehydratase 2 (154 aa).

Y23 acts as the Proton acceptor in catalysis. Residues N79, H85, and D92 each contribute to the substrate site. The active-site Proton donor is the H105. Substrate contacts are provided by residues 106-107 and R116; that span reads IS.

Belongs to the type-II 3-dehydroquinase family. Homododecamer.

It catalyses the reaction 3-dehydroquinate = 3-dehydroshikimate + H2O. The protein operates within metabolic intermediate biosynthesis; chorismate biosynthesis; chorismate from D-erythrose 4-phosphate and phosphoenolpyruvate: step 3/7. Functionally, catalyzes a trans-dehydration via an enolate intermediate. The protein is 3-dehydroquinate dehydratase 2 (aroQ2) of Ralstonia nicotianae (strain ATCC BAA-1114 / GMI1000) (Ralstonia solanacearum).